Here is a 53-residue protein sequence, read N- to C-terminus: Mannose/glucose-specific lectin alpha 1 chain (53 aa).

Belongs to the leguminous lectin family. As to quaternary structure, tetramer of two alpha and two beta chains.

This chain is Mannose/glucose-specific lectin alpha 1 chain, found in Lathyrus ochrus (Cyprus-vetch).